We begin with the raw amino-acid sequence, 179 residues long: UPF0167 protein PA1536 (179 aa).

This sequence belongs to the UPF0167 family.

This is UPF0167 protein PA1536 from Pseudomonas aeruginosa (strain ATCC 15692 / DSM 22644 / CIP 104116 / JCM 14847 / LMG 12228 / 1C / PRS 101 / PAO1).